The chain runs to 22 residues: thr operon leader peptide (22 aa).

Belongs to the thr operon leader peptide family.

Its function is as follows. This protein is involved in control of the biosynthesis of threonine. In Yersinia enterocolitica serotype O:8 / biotype 1B (strain NCTC 13174 / 8081), this protein is thr operon leader peptide.